Reading from the N-terminus, the 30-residue chain is Superoxide dismutase [Cu-Zn] 1 (30 aa).

This sequence belongs to the Cu-Zn superoxide dismutase family. Cu cation serves as cofactor. Requires Zn(2+) as cofactor. Expressed in fruits, leaves and pollen grains.

It is found in the cytoplasm. The protein resides in the endoplasmic reticulum. The catalysed reaction is 2 superoxide + 2 H(+) = H2O2 + O2. Inhibited by KCN and H(2)O(2). In terms of biological role, destroys radicals which are normally produced within the cells and which are toxic to biological systems. Probably involved in the protection against oxidative stress during pollen development. This chain is Superoxide dismutase [Cu-Zn] 1, found in Olea europaea (Common olive).